Consider the following 234-residue polypeptide: CKLF-like MARVEL transmembrane domain-containing protein 4 (234 aa).

Over residues 1–11 (MRSGEELDGFE) the composition is skewed to acidic residues. Residues 1–38 (MRSGEELDGFEGEASSTSMISGASSPYQPTTEPVSQRR) form a disordered region. The span at 15–25 (SSTSMISGASS) shows a compositional bias: low complexity. The region spanning 49–176 (YLRGALGRLK…NTFLAVQKWR (128 aa)) is the MARVEL domain. The next 4 membrane-spanning stretches (helical) occupy residues 59-79 (VAQVILALIAFICIETIMACS), 85-105 (YFFEFVSCSAFVVTGVLLIMF), 123-143 (LVNTGLSAFLFFIASIVLAAL), and 151-171 (IAAVIFGFLATAAYAVNTFLA). S194 carries the phosphoserine modification.

The protein belongs to the chemokine-like factor family. As to quaternary structure, interacts with PD-L1/CD274 and CMTM6. As to expression, highly expressed in testis and prostate.

The protein localises to the membrane. Its function is as follows. Acts as a backup for CMTM6 to regulate plasma membrane expression of PD-L1/CD274, an immune inhibitory ligand critical for immune tolerance to self and antitumor immunity. May protect PD-L1/CD274 from being polyubiquitinated and targeted for degradation. The chain is CKLF-like MARVEL transmembrane domain-containing protein 4 from Homo sapiens (Human).